Reading from the N-terminus, the 572-residue chain is SHUGOSHIN 1 (572 aa).

Residues 59-110 (KHQQQAILISSKENAENLQKENTKLMKVVMERDGIKSDLKKLRIEFQKVQEQ) adopt a coiled-coil conformation. 4 disordered regions span residues 185 to 221 (DADH…PANS), 244 to 285 (KLVS…QTET), 333 to 352 (ARLK…SIET), and 484 to 572 (SRRQ…RGGF). Residues 192 to 201 (SGSSNANSLQ) show a composition bias toward polar residues. Composition is skewed to basic and acidic residues over residues 244–257 (KLVS…ENHI), 336–352 (KSQE…SIET), 523–542 (ELKR…EMRK), and 552–572 (AAEK…RGGF).

The protein belongs to the shugoshin family.

Functionally, protects sister chromatid centromere cohesion in meiosis I but not through the protection of the cohesin SYN1. Required with SGO2 for full protection of centromeric cohesion during anaphase I. Required to prevent precocious release of pericentromeric cohesins during meiosis. Not necessary for the maintenance of the synaptonemal complex (SC). Not required for monopolar spindle orientation in meiosis I. This chain is SHUGOSHIN 1, found in Arabidopsis thaliana (Mouse-ear cress).